The following is a 289-amino-acid chain: MDFSKGHGTENDFVVLPDPDVRIDLSAPRVAALCDRRRGLGADGILRVAKAGALAGAGVLAELPDGTSEDDWFMDYRNADGSIAEMCGNGVRVFAHYLRAAGLESRDEFVVGSRAGGKPVIVHSADGAFGEVTVDMGVVRDLGTSAATIDGKVFNGIGIDVGNPHLACVDAHLTAASLSALDLTAAPGFDPGFFPHGVNVEILTRIDSGAVDMRVHERGVGETRSCGTGTVAAATAALRFDGADSGEVNVRIPGGQVTVAVSGGRATLRGPSVLVASGTLDDGWWNGLA.

2 residues coordinate substrate: N11 and N78. Catalysis depends on C87, which acts as the Proton donor. Residues 88 to 89 (GN), N163, N199, and 217 to 218 (ER) each bind substrate. The Proton acceptor role is filled by C226. A substrate-binding site is contributed by 227-228 (GT).

Belongs to the diaminopimelate epimerase family. Homodimer.

Its subcellular location is the cytoplasm. The catalysed reaction is (2S,6S)-2,6-diaminopimelate = meso-2,6-diaminopimelate. The protein operates within amino-acid biosynthesis; L-lysine biosynthesis via DAP pathway; DL-2,6-diaminopimelate from LL-2,6-diaminopimelate: step 1/1. Functionally, catalyzes the stereoinversion of LL-2,6-diaminopimelate (L,L-DAP) to meso-diaminopimelate (meso-DAP), a precursor of L-lysine and an essential component of the bacterial peptidoglycan. The polypeptide is Diaminopimelate epimerase (Rhodococcus jostii (strain RHA1)).